A 179-amino-acid polypeptide reads, in one-letter code: MSRVGKKLLEIPSGVTVTLNEGNTVAVKGPKGELTRTFHPDMEIKIEDNVLTVTRPSDHKEHRALHGTTRSLLGNMVEGVSKGFERGLELVGVGYRAAKSGNKLVLNVGYSHPVEIVPEEGIEIEVPSQTKVVVKGTDKERVGAIAANIRAVRSPEPYKGKGIRYEGEVVRRKEGKSAK.

The protein belongs to the universal ribosomal protein uL6 family. In terms of assembly, part of the 50S ribosomal subunit.

Functionally, this protein binds to the 23S rRNA, and is important in its secondary structure. It is located near the subunit interface in the base of the L7/L12 stalk, and near the tRNA binding site of the peptidyltransferase center. This is Large ribosomal subunit protein uL6 from Bacillus velezensis (strain DSM 23117 / BGSC 10A6 / LMG 26770 / FZB42) (Bacillus amyloliquefaciens subsp. plantarum).